The sequence spans 177 residues: Large ribosomal subunit protein uL6 (177 aa).

This sequence belongs to the universal ribosomal protein uL6 family. As to quaternary structure, part of the 50S ribosomal subunit.

Its function is as follows. This protein binds to the 23S rRNA, and is important in its secondary structure. It is located near the subunit interface in the base of the L7/L12 stalk, and near the tRNA binding site of the peptidyltransferase center. This chain is Large ribosomal subunit protein uL6, found in Pseudoalteromonas atlantica (strain T6c / ATCC BAA-1087).